The following is a 200-amino-acid chain: ADP-ribosylation factor-like protein 4D (200 aa).

Gly-2 carries the N-myristoyl glycine lipid modification. GTP is bound by residues 27–34 (GLDSAGKT), 75–79 (DVGGQ), and 134–137 (NKQD).

Belongs to the small GTPase superfamily. Arf family. Interacts with CYTH2; the interaction is direct and ARL4D GTP-dependent. Does not interact with ARL4D.

Its subcellular location is the nucleus. It is found in the nucleolus. The protein resides in the cell membrane. It localises to the cytoplasm. Its function is as follows. Small GTP-binding protein which cycles between an inactive GDP-bound and an active GTP-bound form, and the rate of cycling is regulated by guanine nucleotide exchange factors (GEF) and GTPase-activating proteins (GAP). GTP-binding protein that does not act as an allosteric activator of the cholera toxin catalytic subunit. Recruits CYTH1, CYTH2, CYTH3 and CYTH4 to the plasma membrane in GDP-bound form. This chain is ADP-ribosylation factor-like protein 4D (ARL4D), found in Bos taurus (Bovine).